The sequence spans 541 residues: Putative transferase YhbX (541 aa).

The Periplasmic portion of the chain corresponds to 1–60 (MTVFNKFARSFKSHWLLYLSVIVFGITNLVASSGAHMVQRLLFFVLTILVVKRISSLPLR). A helical membrane pass occupies residues 61–81 (LLVAAPFVLLTAADMSISLYS). Residues 82–110 (WCTFGTTFNDGFAISVLQSDPDEVAKMLG) lie on the Cytoplasmic side of the membrane. Residues 111 to 131 (MYSPYLCAFAFLSLLFLAVII) traverse the membrane as a helical segment. Residues 132-141 (KYDVSLPTKK) are Periplasmic-facing. The helical transmembrane segment at 142-162 (VTGILLLIVISGSLFSACQFA) threads the bilayer. Residues 163 to 264 (YKDAKNKNAF…RKQIKLFNQA (102 aa)) are Cytoplasmic-facing. A helical membrane pass occupies residues 265 to 285 (ISGAPYTALSVPLSLTADSVL). The Periplasmic portion of the chain corresponds to 286–541 (SHDIHNYPDN…QGNPTPEGQG (256 aa)).

It belongs to the phosphoethanolamine transferase family.

The protein resides in the cell inner membrane. Its function is as follows. There are several lipid A forms in this strain, including a phosphoethanolamine (1-O-P-pEtN) form; overexpression of this gene does not lead to higher levels of the 1-O-P-pEtN form of lipid A. This Escherichia coli O157:H7 protein is Putative transferase YhbX (yhbX).